The following is a 175-amino-acid chain: Co-chaperone protein HscB homolog (175 aa).

A J domain is found at 7-79 (SHFDLFHLPA…LKRATYLLSL (73 aa)).

The protein belongs to the HscB family. In terms of assembly, interacts with HscA and stimulates its ATPase activity.

In terms of biological role, co-chaperone involved in the maturation of iron-sulfur cluster-containing proteins. Seems to help targeting proteins to be folded toward HscA. This Burkholderia multivorans (strain ATCC 17616 / 249) protein is Co-chaperone protein HscB homolog.